The sequence spans 321 residues: ATP-dependent 6-phosphofructokinase (321 aa).

Gly11 serves as a coordination point for ATP. Residue 21 to 25 (RAVVR) participates in ADP binding. ATP contacts are provided by residues 72–73 (RC) and 102–105 (GDGS). Asp103 lines the Mg(2+) pocket. 126-128 (TID) provides a ligand contact to substrate. The Proton acceptor role is filled by Asp128. Arg155 serves as a coordination point for ADP. Residues Arg163 and 170 to 172 (MGR) contribute to the substrate site. ADP-binding positions include 186-188 (GAE), Arg212, and 214-216 (KLH). Substrate is bound by residues Glu223, Arg245, and 251-254 (HIQR).

Belongs to the phosphofructokinase type A (PFKA) family. ATP-dependent PFK group I subfamily. Prokaryotic clade 'B1' sub-subfamily. In terms of assembly, homotetramer. Mg(2+) serves as cofactor.

Its subcellular location is the cytoplasm. The enzyme catalyses beta-D-fructose 6-phosphate + ATP = beta-D-fructose 1,6-bisphosphate + ADP + H(+). The protein operates within carbohydrate degradation; glycolysis; D-glyceraldehyde 3-phosphate and glycerone phosphate from D-glucose: step 3/4. Allosterically activated by ADP and other diphosphonucleosides, and allosterically inhibited by phosphoenolpyruvate. Catalyzes the phosphorylation of D-fructose 6-phosphate to fructose 1,6-bisphosphate by ATP, the first committing step of glycolysis. This chain is ATP-dependent 6-phosphofructokinase, found in Thermoanaerobacter pseudethanolicus (strain ATCC 33223 / 39E) (Clostridium thermohydrosulfuricum).